A 348-amino-acid polypeptide reads, in one-letter code: Phenylalanine--tRNA ligase alpha subunit (348 aa).

Glutamate 259 contacts Mg(2+).

The protein belongs to the class-II aminoacyl-tRNA synthetase family. Phe-tRNA synthetase alpha subunit type 1 subfamily. Tetramer of two alpha and two beta subunits. Requires Mg(2+) as cofactor.

Its subcellular location is the cytoplasm. The enzyme catalyses tRNA(Phe) + L-phenylalanine + ATP = L-phenylalanyl-tRNA(Phe) + AMP + diphosphate + H(+). This Latilactobacillus sakei subsp. sakei (strain 23K) (Lactobacillus sakei subsp. sakei) protein is Phenylalanine--tRNA ligase alpha subunit.